Here is a 347-residue protein sequence, read N- to C-terminus: Anthranilate phosphoribosyltransferase (347 aa).

5-phospho-alpha-D-ribose 1-diphosphate contacts are provided by residues glycine 82, 85–86 (GD), threonine 90, 92–95 (NIST), 110–118 (KHGNRAITS), and threonine 122. Glycine 82 is a binding site for anthranilate. Serine 94 contributes to the Mg(2+) binding site. Position 113 (asparagine 113) interacts with anthranilate. Anthranilate is bound at residue arginine 168. Mg(2+) contacts are provided by aspartate 226 and glutamate 227.

The protein belongs to the anthranilate phosphoribosyltransferase family. As to quaternary structure, homodimer. The cofactor is Mg(2+).

The catalysed reaction is N-(5-phospho-beta-D-ribosyl)anthranilate + diphosphate = 5-phospho-alpha-D-ribose 1-diphosphate + anthranilate. It participates in amino-acid biosynthesis; L-tryptophan biosynthesis; L-tryptophan from chorismate: step 2/5. Catalyzes the transfer of the phosphoribosyl group of 5-phosphorylribose-1-pyrophosphate (PRPP) to anthranilate to yield N-(5'-phosphoribosyl)-anthranilate (PRA). The sequence is that of Anthranilate phosphoribosyltransferase from Caulobacter sp. (strain K31).